A 147-amino-acid polypeptide reads, in one-letter code: Hemoglobin subunit gamma (147 aa).

A Globin domain is found at 3–147 (HFTEEDKATI…VASALSSRYH (145 aa)). Heme b-binding residues include His-64 and His-93.

Belongs to the globin family. As to quaternary structure, heterotetramer of two alpha chains and two gamma chains in fetal hemoglobin (Hb F). As to expression, red blood cells.

Gamma chains make up the fetal hemoglobin F, in combination with alpha chains. In Macaca fuscata fuscata (Japanese macaque), this protein is Hemoglobin subunit gamma (HBG).